Consider the following 308-residue polypeptide: Elongation factor Ts (308 aa).

The segment at 80-83 is involved in Mg(2+) ion dislocation from EF-Tu; that stretch reads TDFV.

It belongs to the EF-Ts family.

The protein resides in the cytoplasm. Associates with the EF-Tu.GDP complex and induces the exchange of GDP to GTP. It remains bound to the aminoacyl-tRNA.EF-Tu.GTP complex up to the GTP hydrolysis stage on the ribosome. In Rhizobium etli (strain CIAT 652), this protein is Elongation factor Ts.